Reading from the N-terminus, the 260-residue chain is Hydroxyethylthiazole kinase (260 aa).

Position 38 (M38) interacts with substrate. ATP contacts are provided by K114 and S161. G188 is a substrate binding site.

This sequence belongs to the Thz kinase family. Requires Mg(2+) as cofactor.

The enzyme catalyses 5-(2-hydroxyethyl)-4-methylthiazole + ATP = 4-methyl-5-(2-phosphooxyethyl)-thiazole + ADP + H(+). It functions in the pathway cofactor biosynthesis; thiamine diphosphate biosynthesis; 4-methyl-5-(2-phosphoethyl)-thiazole from 5-(2-hydroxyethyl)-4-methylthiazole: step 1/1. Functionally, catalyzes the phosphorylation of the hydroxyl group of 4-methyl-5-beta-hydroxyethylthiazole (THZ). The polypeptide is Hydroxyethylthiazole kinase (Campylobacter lari (strain RM2100 / D67 / ATCC BAA-1060)).